A 516-amino-acid polypeptide reads, in one-letter code: Putative transposase y4bL/y4kJ/y4tB (516 aa).

An HTH IS408-type domain is found at 15–96 (IRTILRLTHE…PDWALVVREL (82 aa)). Residues 138–319 (FRNRHAAGAV…SRRELFEEIE (182 aa)) enclose the Integrase catalytic domain. The segment at 493–516 (ERPQAEHAAPTPAHTNIRGRSYYQ) is disordered.

This sequence belongs to the transposase IS21/IS408/IS1162 family.

The polypeptide is Putative transposase y4bL/y4kJ/y4tB (Sinorhizobium fredii (strain NBRC 101917 / NGR234)).